Here is a 77-residue protein sequence, read N- to C-terminus: Acyl carrier protein (77 aa).

The Carrier domain maps to 1-76; sequence MSLEDDVKSI…DVITYIKTRQ (76 aa). Ser-36 bears the O-(pantetheine 4'-phosphoryl)serine mark.

It belongs to the acyl carrier protein (ACP) family. Post-translationally, 4'-phosphopantetheine is transferred from CoA to a specific serine of apo-ACP by AcpS. This modification is essential for activity because fatty acids are bound in thioester linkage to the sulfhydryl of the prosthetic group.

Its subcellular location is the cytoplasm. Its pathway is lipid metabolism; fatty acid biosynthesis. Functionally, carrier of the growing fatty acid chain in fatty acid biosynthesis. In Chlamydia caviae (strain ATCC VR-813 / DSM 19441 / 03DC25 / GPIC) (Chlamydophila caviae), this protein is Acyl carrier protein.